Consider the following 772-residue polypeptide: Alpha-xylosidase (772 aa).

Residue aspartate 416 is the Nucleophile of the active site. The active site involves glutamate 419. Aspartate 482 serves as the catalytic Proton donor.

The protein belongs to the glycosyl hydrolase 31 family. In terms of assembly, homohexamer.

It carries out the reaction Hydrolysis of terminal, non-reducing alpha-D-xylose residues with release of alpha-D-xylose.. Functionally, can catalyze the transfer of alpha-xylosyl residue from alpha-xyloside to xylose, glucose, mannose, fructose, maltose, isomaltose, nigerose, kojibiose, sucrose and trehalose. The polypeptide is Alpha-xylosidase (yicI) (Escherichia coli (strain K12)).